The primary structure comprises 89 residues: MASTSARSGDKKDTWPIQAAASLGGGQKASLSRSEEFLTRISTELTDEALFTARSHMNPMPDKEKQTKDQGTQISRHVFFTKTRGTDTR.

Disordered stretches follow at residues 1 to 31 (MAST…KASL) and 54 to 89 (RSHM…TDTR).

As to expression, specifically expressed in testis (at protein level).

The polypeptide is Putative protein T-ENOL (Rattus norvegicus (Rat)).